A 479-amino-acid polypeptide reads, in one-letter code: FAD-dependent monooxygenase atmM (479 aa).

Residues 10-30 (IIVGGSVAGLTLAHCLQRAGI) traverse the membrane as a helical segment. Glutamate 36, glycine 50, arginine 109, aspartate 309, and alanine 322 together coordinate FAD. A helical transmembrane segment spans residues 445–465 (WILVLLVIVVSFGLHSPELVI).

Belongs to the paxM FAD-dependent monooxygenase family. Requires FAD as cofactor.

The protein resides in the membrane. It participates in secondary metabolite biosynthesis. In terms of biological role, FAD-dependent monooxygenase; part of the ATM1 gene cluster that mediates the biosynthesis of aflatrem, a tremorgenic mycotoxin with acute neurotoxic effects. Synthesis of geranylgeranyl diphosphate (GGPP) by AtmG (a GGPP synthase) precedes condensation of GGPP with indole 3-glycerol phosphate, followed by epoxidation and cyclization by AtmM (a FAD-dependent monooxygenase) and AtmC (a prenyltransferase) to produce paspaline. AtmB is also essential for paspaline production, but its exact role has not been identified yet. AtmP, a cytochrome P450 monooxygenase, subsequently converts paspaline to 13-desoxypaxilline via PC-M6 by removal of the C-30 methyl group and oxidation at C-10. AtmQ, a cytochrome P450 monooxygenase, then catalyzes the oxidation of 13-desoxypaxilline, first at C-7 to produce paspalicine and then at C-13 to form paspalinine. Finally, AtmD prenylates paspalinine to form aflatrem. The polypeptide is FAD-dependent monooxygenase atmM (Aspergillus flavus).